We begin with the raw amino-acid sequence, 122 residues long: Large ribosomal subunit protein uL14 (122 aa).

The protein belongs to the universal ribosomal protein uL14 family. In terms of assembly, part of the 50S ribosomal subunit. Forms a cluster with proteins L3 and L19. In the 70S ribosome, L14 and L19 interact and together make contacts with the 16S rRNA in bridges B5 and B8.

Functionally, binds to 23S rRNA. Forms part of two intersubunit bridges in the 70S ribosome. This chain is Large ribosomal subunit protein uL14, found in Geotalea daltonii (strain DSM 22248 / JCM 15807 / FRC-32) (Geobacter daltonii).